The sequence spans 325 residues: Porphobilinogen deaminase (325 aa).

Residue C253 is modified to S-(dipyrrolylmethanemethyl)cysteine.

The protein belongs to the HMBS family. Dipyrromethane serves as cofactor.

The enzyme catalyses 4 porphobilinogen + H2O = hydroxymethylbilane + 4 NH4(+). It participates in porphyrin-containing compound metabolism; protoporphyrin-IX biosynthesis; coproporphyrinogen-III from 5-aminolevulinate: step 2/4. Its function is as follows. Tetrapolymerization of the monopyrrole PBG into the hydroxymethylbilane pre-uroporphyrinogen in several discrete steps. The polypeptide is Porphobilinogen deaminase (hemC) (Dictyostelium discoideum (Social amoeba)).